A 266-amino-acid polypeptide reads, in one-letter code: Dihydropteroate synthase (266 aa).

The Pterin-binding domain maps to 12 to 260 (AAIMGILNVT…DVKANQDIVA (249 aa)). Asparagine 19 is a Mg(2+) binding site. Residues threonine 59, aspartate 93, asparagine 112, aspartate 176, lysine 212, and 248–250 (RVH) contribute to the (7,8-dihydropterin-6-yl)methyl diphosphate site.

Belongs to the DHPS family. Homodimer or homotrimer. It depends on Mg(2+) as a cofactor.

It catalyses the reaction (7,8-dihydropterin-6-yl)methyl diphosphate + 4-aminobenzoate = 7,8-dihydropteroate + diphosphate. Its pathway is cofactor biosynthesis; tetrahydrofolate biosynthesis; 7,8-dihydrofolate from 2-amino-4-hydroxy-6-hydroxymethyl-7,8-dihydropteridine diphosphate and 4-aminobenzoate: step 1/2. Its function is as follows. Catalyzes the condensation of para-aminobenzoate (pABA) with 6-hydroxymethyl-7,8-dihydropterin diphosphate (DHPt-PP) to form 7,8-dihydropteroate (H2Pte), the immediate precursor of folate derivatives. The chain is Dihydropteroate synthase (folP) from Streptococcus pyogenes serotype M3 (strain ATCC BAA-595 / MGAS315).